We begin with the raw amino-acid sequence, 105 residues long: 5,5'-dehydrodivanillate O-demethylase ferredoxin subunit (105 aa).

Residues 2 to 105 (AQLKVVTRDG…GMTVTIAPED (104 aa)) form the 2Fe-2S ferredoxin-type domain. The [2Fe-2S] cluster site is built by cysteine 40, cysteine 46, cysteine 49, and cysteine 86.

It belongs to the adrenodoxin/putidaredoxin family. Monomer. The three-component monooxygenase is composed of an oxygenase (LigXa), a ferredoxin (LigXc) and a ferredoxin reductase (LigXd). The cofactor is [2Fe-2S] cluster.

The enzyme catalyses 5,5'-dehydrodivanillate + NADH + O2 + H(+) = 2,2',3-trihydroxy-3'-methoxy-5,5'-dicarboxybiphenyl + formaldehyde + NAD(+) + H2O. Involved in the catabolism of 5,5'-dehydrodivanillate (DDVA), an intermediate in the biodegradation of lignin. Part of a three-component monooxygenase that catalyzes the O-demethylation of DDVA, leading to the formation of 2,2',3-trihydroxy-3'-methoxy-5,5'-dicarboxybiphenyl (OH-DDVA). LigXc probably functions as an intermediate electron transfer protein between LigXd and LigXa. The chain is 5,5'-dehydrodivanillate O-demethylase ferredoxin subunit from Sphingobium sp. (strain NBRC 103272 / SYK-6).